Here is a 1027-residue protein sequence, read N- to C-terminus: Presequence protease, mitochondrial (1027 aa).

A mitochondrion-targeting transit peptide spans 1 to 22; it reads MIRQCRAGLRLCRALYQTSYRW. H98 serves as a coordination point for Zn(2+). The Proton acceptor role is filled by E101. H102 and E199 together coordinate Zn(2+). A disulfide bond links C113 and C550. The disordered stretch occupies residues 800–829; sequence KKERKSIRPHVVEKSSSPSSSGSEISRRAT. The span at 814–823 shows a compositional bias: low complexity; sequence SSSPSSSGSE.

The protein belongs to the peptidase M16 family. PreP subfamily. In terms of assembly, monomer and homodimer; homodimerization is induced by binding of the substrate. It depends on Zn(2+) as a cofactor. Post-translationally, a disulfide bond locks the enzyme in the closed conformation preventing substrate entry into the catalytic chamber.

The protein localises to the mitochondrion matrix. Mainly exists in a closed and catalytically competent conformation but a closed-to-open switch allows substrate entry into the catalytic chamber. Substrate binding induces closure and dimerization. A disulfide bond may lock the enzyme in a closed conformation preventing substrate entry into the catalytic chamber, participating in redox regulation of the enzyme. Inhibited by metal-chelating agents. Inhibited by nickel and zinc excess, and slightly activated by manganese. In terms of biological role, metalloendopeptidase of the mitochondrial matrix that functions in peptide cleavage and degradation rather than in protein processing. Has an ATP-independent activity. Specifically cleaves peptides in the range of 5 to 65 residues. Shows a preference for cleavage after small polar residues and before basic residues, but without any positional preference. Degrades the transit peptides of mitochondrial proteins after their cleavage. Also degrades other unstructured peptides. The chain is Presequence protease, mitochondrial (pitrm1) from Xenopus tropicalis (Western clawed frog).